Consider the following 101-residue polypeptide: Urease subunit beta (101 aa).

Belongs to the urease beta subunit family. Heterotrimer of UreA (gamma), UreB (beta) and UreC (alpha) subunits. Three heterotrimers associate to form the active enzyme.

The protein localises to the cytoplasm. It carries out the reaction urea + 2 H2O + H(+) = hydrogencarbonate + 2 NH4(+). The protein operates within nitrogen metabolism; urea degradation; CO(2) and NH(3) from urea (urease route): step 1/1. This is Urease subunit beta from Burkholderia thailandensis (strain ATCC 700388 / DSM 13276 / CCUG 48851 / CIP 106301 / E264).